Here is a 1259-residue protein sequence, read N- to C-terminus: Lysine-specific demethylase 2B (1259 aa).

The JmjC domain maps to 147 to 315 (FSHTKLERVV…MQLRVFEIED (169 aa)). Thr-208 serves as a coordination point for substrate. Residues His-211 and Asp-213 each contribute to the Fe cation site. Lys-228 provides a ligand contact to substrate. His-283 contributes to the Fe cation binding site. Residues 388-402 (EEKGNLVEKPSKQSG) are compositionally biased toward basic and acidic residues. Disordered stretches follow at residues 388-463 (EEKG…ATDM) and 536-562 (KPSK…SANR). The segment covering 403-413 (DESSTTNSTHS) has biased composition (polar residues). Positions 414–423 (NGKDAAEKKQ) are enriched in basic and acidic residues. Residues 426-437 (TLMQQLKRTLSN) are compositionally biased toward polar residues. A compositionally biased stretch (basic residues) spans 536-548 (KPSKNRAVGRPKG). Residues 567–613 (ARRRRTRCRKCEACLRTECGECHFCKDMKKFGGPGRMKQSCIMRQCI) form a CXXC-type zinc finger. Zn(2+) contacts are provided by Cys-574, Cys-577, Cys-580, Cys-585, Cys-588, Cys-591, Cys-607, Cys-612, Cys-623, Cys-626, Cys-649, Cys-652, His-657, Cys-660, Cys-680, and Cys-683. The PHD-type zinc finger occupies 620–686 (TAVCLVCGEA…CWECPKCNHA (67 aa)). Composition is skewed to basic and acidic residues over residues 729–763 (KKKV…EDGH) and 771–790 (EKPP…EEKL). The disordered stretch occupies residues 729–958 (KKKVEREETP…PPPSLSPPKC (230 aa)). A compositionally biased stretch (polar residues) spans 835–848 (SRSSSPTAGPSTEG). Positions 854–863 (KKKIRRKRRV) are enriched in basic residues. The segment covering 864-877 (SNKELSKELSKELN) has biased composition (basic and acidic residues). Residues 864-891 (SNKELSKELSKELNQEIQKTESSLASEN) are a coiled coil. The span at 878–889 (QEIQKTESSLAS) shows a compositional bias: polar residues. Positions 890-908 (ENHHPIKSEPESDNEESKK) are enriched in basic and acidic residues. Positions 985–1030 (AHVMQREVWMAIFSYLSHRDLCICMRICRTWNRWCCDKRLWTQIDL) constitute an F-box domain. LRR repeat units follow at residues 1056–1081 (WTNI…NLSG), 1082–1105 (CSWI…NVQW), 1145–1170 (GLDI…DLSY), 1171–1200 (CNHV…NLSD), and 1201–1225 (CNNV…DLRF).

It belongs to the JHDM1 histone demethylase family. Fe(2+) is required as a cofactor.

The protein resides in the nucleus. It is found in the nucleolus. Its subcellular location is the chromosome. The catalysed reaction is N(6),N(6)-dimethyl-L-lysyl(36)-[histone H3] + 2 2-oxoglutarate + 2 O2 = L-lysyl(36)-[histone H3] + 2 formaldehyde + 2 succinate + 2 CO2. With respect to regulation, histone demethylase activity is inhibited by fumarate. Histone demethylase that demethylates 'Lys-4' and 'Lys-36' of histone H3, thereby playing a central role in histone code. Preferentially demethylates trimethylated H3 'Lys-4' and dimethylated H3 'Lys-36' residue while it has weak or no activity for mono- and tri-methylated H3 'Lys-36'. Preferentially binds the transcribed region of ribosomal RNA and represses the transcription of ribosomal RNA genes which inhibits cell growth and proliferation. The sequence is that of Lysine-specific demethylase 2B (kdm2b) from Xenopus laevis (African clawed frog).